The primary structure comprises 263 residues: Hydroxyethylthiazole kinase (263 aa).

Position 39 (methionine 39) interacts with substrate. Residues lysine 115 and threonine 160 each contribute to the ATP site. Substrate is bound at residue glycine 187.

The protein belongs to the Thz kinase family. Mg(2+) serves as cofactor.

It catalyses the reaction 5-(2-hydroxyethyl)-4-methylthiazole + ATP = 4-methyl-5-(2-phosphooxyethyl)-thiazole + ADP + H(+). The protein operates within cofactor biosynthesis; thiamine diphosphate biosynthesis; 4-methyl-5-(2-phosphoethyl)-thiazole from 5-(2-hydroxyethyl)-4-methylthiazole: step 1/1. In terms of biological role, catalyzes the phosphorylation of the hydroxyl group of 4-methyl-5-beta-hydroxyethylthiazole (THZ). The protein is Hydroxyethylthiazole kinase of Staphylococcus saprophyticus subsp. saprophyticus (strain ATCC 15305 / DSM 20229 / NCIMB 8711 / NCTC 7292 / S-41).